Here is a 239-residue protein sequence, read N- to C-terminus: tRNA (guanine-N(7)-)-methyltransferase (239 aa).

Residues Glu-69, Glu-94, Asp-121, and Asp-144 each contribute to the S-adenosyl-L-methionine site. Residue Asp-144 is part of the active site. Position 148 (Lys-148) interacts with substrate. The interval 150 to 155 (RHNKRR) is interaction with RNA. Substrate contacts are provided by residues Asp-180 and 217-220 (TKFE).

It belongs to the class I-like SAM-binding methyltransferase superfamily. TrmB family. As to quaternary structure, monomer.

It catalyses the reaction guanosine(46) in tRNA + S-adenosyl-L-methionine = N(7)-methylguanosine(46) in tRNA + S-adenosyl-L-homocysteine. The protein operates within tRNA modification; N(7)-methylguanine-tRNA biosynthesis. Functionally, catalyzes the formation of N(7)-methylguanine at position 46 (m7G46) in tRNA. This is tRNA (guanine-N(7)-)-methyltransferase from Yersinia pseudotuberculosis serotype O:1b (strain IP 31758).